The following is a 274-amino-acid chain: Diaminopimelate epimerase (274 aa).

Substrate contacts are provided by N11, Q44, and N64. C73 acts as the Proton donor in catalysis. Residues 74-75, N157, N190, and 208-209 contribute to the substrate site; these read GN and ER. The active-site Proton acceptor is C217. 218 to 219 lines the substrate pocket; sequence GS.

Belongs to the diaminopimelate epimerase family. Homodimer.

Its subcellular location is the cytoplasm. It catalyses the reaction (2S,6S)-2,6-diaminopimelate = meso-2,6-diaminopimelate. Its pathway is amino-acid biosynthesis; L-lysine biosynthesis via DAP pathway; DL-2,6-diaminopimelate from LL-2,6-diaminopimelate: step 1/1. Its function is as follows. Catalyzes the stereoinversion of LL-2,6-diaminopimelate (L,L-DAP) to meso-diaminopimelate (meso-DAP), a precursor of L-lysine and an essential component of the bacterial peptidoglycan. This chain is Diaminopimelate epimerase, found in Erwinia tasmaniensis (strain DSM 17950 / CFBP 7177 / CIP 109463 / NCPPB 4357 / Et1/99).